Reading from the N-terminus, the 309-residue chain is Protein FdhE homolog (309 aa).

Belongs to the FdhE family.

The protein localises to the cytoplasm. Necessary for formate dehydrogenase activity. This is Protein FdhE homolog from Yersinia enterocolitica serotype O:8 / biotype 1B (strain NCTC 13174 / 8081).